A 51-amino-acid chain; its full sequence is UPF0337 protein NE0131 (51 aa).

Belongs to the UPF0337 (CsbD) family.

This Nitrosomonas europaea (strain ATCC 19718 / CIP 103999 / KCTC 2705 / NBRC 14298) protein is UPF0337 protein NE0131.